Consider the following 565-residue polypeptide: Periplasmic trehalase (565 aa).

Positions 1-30 (MKSPAPSRPQKMALIPACIFLCFAALSVQA) are cleaved as a signal peptide. Substrate-binding positions include R152, 159 to 160 (WD), N196, 205 to 207 (RSQ), 277 to 279 (RPE), and G310. Active-site proton donor/acceptor residues include D312 and E496. A substrate-binding site is contributed by E511. Residues 538–565 (PCDNVPATRPTVKSATTQPSTKEAQPTP) form a disordered region. Polar residues predominate over residues 548–565 (TVKSATTQPSTKEAQPTP).

The protein belongs to the glycosyl hydrolase 37 family. Monomer.

The protein resides in the periplasm. It catalyses the reaction alpha,alpha-trehalose + H2O = alpha-D-glucose + beta-D-glucose. In terms of biological role, provides the cells with the ability to utilize trehalose at high osmolarity by splitting it into glucose molecules that can subsequently be taken up by the phosphotransferase-mediated uptake system. This chain is Periplasmic trehalase, found in Escherichia coli O8 (strain IAI1).